The following is a 257-amino-acid chain: Protein Cmaq_1209 (257 aa).

This sequence belongs to the CinA family.

This chain is Protein Cmaq_1209, found in Caldivirga maquilingensis (strain ATCC 700844 / DSM 13496 / JCM 10307 / IC-167).